The chain runs to 2225 residues: Nonribisomal peptide synthetase notE' (2225 aa).

Residues 24–59 (TVRESLSSSPSPLPSLASPVSSGSEPPAFGETQPQS) form a disordered region. A compositionally biased stretch (low complexity) spans 28–49 (SLSSSPSPLPSLASPVSSGSEP). Residues 83–482 (QERCKEAPQS…GRRDGQLKIR (400 aa)) are adenylation 1. Positions 614-690 (SPTTATELML…EQAQRATPMT (77 aa)) constitute a Carrier 1 domain. Position 651 is an O-(pantetheine 4'-phosphoryl)serine (S651). The tract at residues 730 to 1142 (EDIYPCTPLQ…DLASPLDQDL (413 aa)) is condensation 1. The segment at 1164–1563 (AQAMQQPSRQ…GRRDTQVKVR (400 aa)) is adenylation 2. Positions 1699 to 1775 (PVSHGAELRL…DLARCTGEEQ (77 aa)) constitute a Carrier 2 domain. S1736 is subject to O-(pantetheine 4'-phosphoryl)serine. The interval 1827–2138 (FAFHGEVSID…FILQHQNIDM (312 aa)) is condensation 2.

This sequence belongs to the NRP synthetase family.

The enzyme catalyses L-proline + L-tryptophan + 2 ATP = brevianamide F + 2 AMP + 2 diphosphate + 2 H(+). Its pathway is alkaloid biosynthesis. Functionally, nonribisomal peptide synthetase; part of the gene cluster that mediates the biosynthesis of notoamide, a fungal indole alkaloid that belongs to a family of natural products containing a characteristic bicyclo[2.2.2]diazaoctane core. The first step of notoamide biosynthesis involves coupling of L-proline and L-tryptophan by the bimodular NRPS notE', to produce cyclo-L-tryptophan-L-proline called brevianamide F. The reverse prenyltransferase notF' then acts as a deoxybrevianamide E synthase and converts brevianamide F to deoxybrevianamide E via reverse prenylation at C-2 of the indole ring leading to the bicyclo[2.2.2]diazaoctane core. Deoxybrevianamide E is further hydroxylated at C-6 of the indole ring, likely catalyzed by the cytochrome P450 monooxygenase notG', to yield 6-hydroxy-deoxybrevianamide E. 6-hydroxy-deoxybrevianamide E is a specific substrate of the prenyltransferase notC' for normal prenylation at C-7 to produce 6-hydroxy-7-prenyl-deoxybrevianamide, also called notoamide S. As the proposed pivotal branching point in notoamide biosynthesis, notoamide S can be diverted to notoamide E through an oxidative pyran ring closure putatively catalyzed by either notH' cytochrome P450 monooxygenase or the notD' FAD-linked oxidoreductase. This step would be followed by an indole 2,3-epoxidation-initiated pinacol-like rearrangement catalyzed by the notB' FAD-dependent monooxygenase leading to the formation of notoamide C and notoamide D. On the other hand notoamide S is converted to notoamide T by notH' (or notD'), a bifunctional oxidase that also functions as the intramolecular Diels-Alderase responsible for generation of (-)-notoamide T. To generate antipodal (+)-notoaminide T, notH (or notD) in Aspergillus strain MF297-2 is expected to catalyze a Diels-Alder reaction leading to the opposite stereochemistry. The remaining oxidoreductase notD' (or notH') likely catalyzes the oxidative pyran ring formation to yield (-)-stephacidin A. The FAD-dependent monooxygenase notI' is highly similar to notB' and is predicted to catalyze a similar conversion from (-)-stephacidin A to (+)-notoamide B via the 2,3-epoxidation of (-)-stephacidin A followed by a pinacol-type rearrangement. Finally, it remains unclear which enzyme could be responsible for the final hydroxylation steps leading to notoamide A and sclerotiamide. This Aspergillus versicolor protein is Nonribisomal peptide synthetase notE'.